The chain runs to 91 residues: Putative defensin-like protein 83 (91 aa).

The signal sequence occupies residues 1–27 (MATNKFLSILLLSLMAFAAILLPMISG). 4 disulfides stabilise this stretch: cysteine 32–cysteine 71, cysteine 37–cysteine 57, cysteine 43–cysteine 69, and cysteine 47–cysteine 70.

This sequence belongs to the DEFL family.

The protein resides in the secreted. This chain is Putative defensin-like protein 83 (LCR46), found in Arabidopsis thaliana (Mouse-ear cress).